We begin with the raw amino-acid sequence, 200 residues long: MAEEPKETGPGFQNPVAGFGVTFKAMFKKRLTEQYPEQQKTTAPRFHGRHQLNRHPDGLEKCVGCELCAWACPADAIYVEGADNTDEERYSPGERYGRVYQINYARCILCGLCIEACPTRALTMTNEFELADSSRANLIYTKEQLLAGLDDNMVDSPHAIYPGMDEQDYYRGLVTEAAPGTERQVAVSKGEKPQDEGVEA.

2 consecutive 4Fe-4S ferredoxin-type domains span residues leucine 52–alanine 82 and arginine 98–glutamate 127. Residues cysteine 62, cysteine 65, cysteine 68, cysteine 72, cysteine 107, cysteine 110, cysteine 113, and cysteine 117 each contribute to the [4Fe-4S] cluster site. Positions threonine 181 to alanine 200 are disordered. Positions lysine 189–alanine 200 are enriched in basic and acidic residues.

The protein belongs to the complex I 23 kDa subunit family. NDH-1 is composed of 14 different subunits. Subunits NuoA, H, J, K, L, M, N constitute the membrane sector of the complex. Requires [4Fe-4S] cluster as cofactor.

The protein resides in the cell membrane. It carries out the reaction a quinone + NADH + 5 H(+)(in) = a quinol + NAD(+) + 4 H(+)(out). NDH-1 shuttles electrons from NADH, via FMN and iron-sulfur (Fe-S) centers, to quinones in the respiratory chain. The immediate electron acceptor for the enzyme in this species is believed to be ubiquinone. Couples the redox reaction to proton translocation (for every two electrons transferred, four hydrogen ions are translocated across the cytoplasmic membrane), and thus conserves the redox energy in a proton gradient. The protein is NADH-quinone oxidoreductase subunit I 1 of Streptomyces avermitilis (strain ATCC 31267 / DSM 46492 / JCM 5070 / NBRC 14893 / NCIMB 12804 / NRRL 8165 / MA-4680).